Here is a 334-residue protein sequence, read N- to C-terminus: Dolichyl-phosphate beta-glucosyltransferase (334 aa).

Residues 1–12 (MRALRFLIENRN) are Lumenal-facing. The helical transmembrane segment at 13–33 (TVFFTLLVALVLSLYLLVYLF) threads the bilayer. At 34–334 (SHTPRPPYPE…LGIYRDNKKC (301 aa)) the chain is on the cytoplasmic side.

The protein belongs to the glycosyltransferase 2 family.

Its subcellular location is the endoplasmic reticulum membrane. The enzyme catalyses a di-trans,poly-cis-dolichyl phosphate + UDP-alpha-D-glucose = a di-trans,poly-cis-dolichyl beta-D-glucosyl phosphate + UDP. It functions in the pathway protein modification; protein glycosylation. Endoplasmic reticulum membrane-bound UDP-glucose:dolichyl-phosphate glucosyltransferase involved in protein N-linked glycosylation. This Saccharomyces cerevisiae (strain ATCC 204508 / S288c) (Baker's yeast) protein is Dolichyl-phosphate beta-glucosyltransferase.